A 143-amino-acid chain; its full sequence is MLSPKRTKFRKQQRGRMTGVASRGNSIHFGDYALQALEPAWITARQIEAGRRAMTRYIRRGGKIWIRIFPDKPVTMRPAETRMGSGKGSPEYWVAVVKPGRIMYEIAGVTEEVAREAMRLAAYKMPIKTRFLVRNQEEQQQEG.

This sequence belongs to the universal ribosomal protein uL16 family. Part of the 50S ribosomal subunit.

Binds 23S rRNA and is also seen to make contacts with the A and possibly P site tRNAs. The sequence is that of Large ribosomal subunit protein uL16 from Thermosynechococcus vestitus (strain NIES-2133 / IAM M-273 / BP-1).